A 414-amino-acid polypeptide reads, in one-letter code: MRITKIFKDYRLFEIFILGIVSGMPLVIIFSTLAVWLKESGIDIAVITTFAVARLSYSLKVFWSPLVDNFKIPFLSRWGHRKSWLILCSSLMALVLIAMSKENPEVSLTSFYFLTILLGFLSSTFDIAVDALRIDKFDQETQSIASATAVFGYRIGMLITGAGALYLAEITGNNWQLTFCVIAIIFVVATIFIITVNEKELVREKINIISITSWISTVINPFKDFFKREFAVTILLAVIFFKLGDAMLGAVASPFYIELGYTKGEIAIIAKLYGLIATLVGGFVGGIVMYRVGNFKGLIITGIAQSLTHFAFIWLNHQPPSFEALLIAITIENFAAAMGATALVGYIGNLCNKKYSATQYALLSSASSLCNNTVTIYAGKLVNMMGWDGFFLFTIILALPALFILMYLNTKVNV.

The next 12 helical transmembrane spans lie at 15 to 35 (IFIL…TLAV), 44 to 63 (IAVI…KVFW), 84 to 104 (WLIL…KENP), 109 to 129 (TSFY…DIAV), 150 to 170 (VFGY…LAEI), 177 to 197 (LTFC…ITVN), 230 to 250 (FAVT…MLGA), 268 to 288 (IIAK…GGIV), 295 to 315 (FKGL…FIWL), 324 to 344 (ALLI…TALV), 360 to 379 (YALL…IYAG), and 389 to 409 (GFFL…MYLN).

This sequence belongs to the major facilitator superfamily.

It localises to the cell inner membrane. This Rickettsia conorii (strain ATCC VR-613 / Malish 7) protein is Putative transporter AmpG 4 (ampG4).